A 292-amino-acid polypeptide reads, in one-letter code: Putative sugar lactone lactonase YvrE (292 aa).

3 residues coordinate a divalent metal cation: Glu15, Asn146, and Asp196.

This sequence belongs to the SMP-30/CGR1 family. It depends on a divalent metal cation as a cofactor.

The protein resides in the cytoplasm. In Bacillus subtilis (strain 168), this protein is Putative sugar lactone lactonase YvrE (yvrE).